The following is a 448-amino-acid chain: Senescence/dehydration-associated protein At4g35985, chloroplastic (448 aa).

Positions 1 to 36 are disordered; sequence MECSATPPKLYPTVDTSTTVAPLPKSSSSSSSTNNN. A chloroplast-targeting transit peptide spans 1–56; the sequence is MECSATPPKLYPTVDTSTTVAPLPKSSSSSSSTNNNNLYPSINVNDLVNNIFPDPT. Over residues 26–36 the composition is skewed to low complexity; it reads SSSSSSSTNNN. The Senescence domain maps to 248–416; it reads IAAGSGQLIK…AWTVFKIRQA (169 aa). A disordered region spans residues 422–448; the sequence is AMKPSSLAKTVVKTAAKERKKGKKSSK. The span at 439–448 shows a compositional bias: basic residues; it reads ERKKGKKSSK.

Expressed in leaves (especially in midribs and trichomes), apical meristemic regions, stems, roots and flowers.

The protein resides in the plastid. The protein localises to the chloroplast. This Arabidopsis thaliana (Mouse-ear cress) protein is Senescence/dehydration-associated protein At4g35985, chloroplastic.